The following is a 428-amino-acid chain: Diaminopimelate decarboxylase (428 aa).

N6-(pyridoxal phosphate)lysine is present on Lys64. Pyridoxal 5'-phosphate contacts are provided by residues Gly239 and 281 to 284 (EPGR). Substrate is bound by residues Arg284, Arg319, and Tyr323. Cys350 serves as the catalytic Proton donor. Positions 351 and 379 each coordinate substrate. Tyr379 lines the pyridoxal 5'-phosphate pocket.

Belongs to the Orn/Lys/Arg decarboxylase class-II family. LysA subfamily. In terms of assembly, homodimer. It depends on pyridoxal 5'-phosphate as a cofactor.

It catalyses the reaction meso-2,6-diaminopimelate + H(+) = L-lysine + CO2. The protein operates within amino-acid biosynthesis; L-lysine biosynthesis via DAP pathway; L-lysine from DL-2,6-diaminopimelate: step 1/1. Functionally, specifically catalyzes the decarboxylation of meso-diaminopimelate (meso-DAP) to L-lysine. The chain is Diaminopimelate decarboxylase from Methanothermobacter thermautotrophicus (strain ATCC 29096 / DSM 1053 / JCM 10044 / NBRC 100330 / Delta H) (Methanobacterium thermoautotrophicum).